The primary structure comprises 254 residues: Thiazole synthase (254 aa).

The active-site Schiff-base intermediate with DXP is lysine 95. 1-deoxy-D-xylulose 5-phosphate-binding positions include glycine 156, 182-183 (AG), and 204-205 (NT).

Belongs to the ThiG family. As to quaternary structure, homotetramer. Forms heterodimers with either ThiH or ThiS.

It localises to the cytoplasm. It carries out the reaction [ThiS sulfur-carrier protein]-C-terminal-Gly-aminoethanethioate + 2-iminoacetate + 1-deoxy-D-xylulose 5-phosphate = [ThiS sulfur-carrier protein]-C-terminal Gly-Gly + 2-[(2R,5Z)-2-carboxy-4-methylthiazol-5(2H)-ylidene]ethyl phosphate + 2 H2O + H(+). Its pathway is cofactor biosynthesis; thiamine diphosphate biosynthesis. In terms of biological role, catalyzes the rearrangement of 1-deoxy-D-xylulose 5-phosphate (DXP) to produce the thiazole phosphate moiety of thiamine. Sulfur is provided by the thiocarboxylate moiety of the carrier protein ThiS. In vitro, sulfur can be provided by H(2)S. This is Thiazole synthase from Shewanella piezotolerans (strain WP3 / JCM 13877).